A 54-amino-acid chain; its full sequence is UPF0391 membrane protein BAV1230 (54 aa).

The next 2 membrane-spanning stretches (helical) occupy residues 5–25 and 27–47; these read AAVFFVIALIAAVLGFGGIAA and AAGIAKILFFVFLVLALLSVL.

Belongs to the UPF0391 family.

The protein resides in the cell membrane. This chain is UPF0391 membrane protein BAV1230, found in Bordetella avium (strain 197N).